Here is a 392-residue protein sequence, read N- to C-terminus: Sugar efflux transporter A (392 aa).

The Cytoplasmic segment spans residues 1–10 (MIWIMTMARR). A helical transmembrane segment spans residues 11–31 (MNGVYAAFMLVAFMMGVAGAL). The Periplasmic portion of the chain corresponds to 32–48 (QAPTLSLFLSREVGAQP). Residues 49 to 69 (FWIGLFYTVNAIAGIGVSLWL) traverse the membrane as a helical segment. Residues 70 to 81 (AKRSDSQGDRRK) are Cytoplasmic-facing. The chain crosses the membrane as a helical span at residues 82-102 (LIIFCCLMAIGNALLFAFNRH). Over 103–106 (YLTL) the chain is Periplasmic. The helical transmembrane segment at 107 to 127 (ITCGVLLASLANTAMPQLFAL) threads the bilayer. Residues 128–149 (AREYADNSAREVVMFSSVMRAQ) lie on the Cytoplasmic side of the membrane. The chain crosses the membrane as a helical span at residues 150–170 (LSLAWVIGPPLAFMLALNYGF). Position 171 (Thr-171) is a topological domain, periplasmic. Residues 172–192 (VMFSIAAGIFTLSLVLIAFML) form a helical membrane-spanning segment. At 193–219 (PSVARVELPSENALSMQGGWQDSNVRM) the chain is on the cytoplasmic side. The chain crosses the membrane as a helical span at residues 220–240 (LFVASTLMWTCNTMYIIDMPL). At 241 to 251 (WISSELGLPDK) the chain is on the periplasmic side. Residues 252 to 272 (LAGFLMGTAAGLEIPAMILAG) form a helical membrane-spanning segment. At 273–282 (YYVKRYGKRR) the chain is on the cytoplasmic side. A helical transmembrane segment spans residues 283 to 303 (MMVIAVAAGVLFYTGLIFFNS). Topologically, residues 304 to 308 (RMALM) are periplasmic. The chain crosses the membrane as a helical span at residues 309–329 (TLQLFNAVFIGIVAGIGMLWF). At 330 to 342 (QDLMPGRAGAATT) the chain is on the cytoplasmic side. The chain crosses the membrane as a helical span at residues 343 to 363 (LFTNSISTGVILAGVIQGAIA). The Periplasmic segment spans residues 364 to 365 (QS). The helical transmembrane segment at 366 to 386 (WGHFAVYWVIAVISVVALFLT) threads the bilayer. The Cytoplasmic segment spans residues 387 to 392 (AKVKDV).

This sequence belongs to the major facilitator superfamily. Set transporter family.

It is found in the cell inner membrane. Functionally, involved in the efflux of sugars. The physiological role may be the detoxification of non-metabolizable sugar analogs. Can transport IPTG, lactose and glucose. Has broad substrate specificity, with preferences for glucosides or galactosides with alkyl or aryl substituents. This Escherichia coli (strain K12) protein is Sugar efflux transporter A (setA).